The sequence spans 601 residues: Glutathione-regulated potassium-efflux system protein KefB (601 aa).

Transmembrane regions (helical) follow at residues 5–25 (SLLM…PLAA), 29–49 (IGAV…GLGF), 55–75 (EILH…GLEL), 87–107 (IFGV…GLLW), 115–135 (AAII…LQLM), 152–172 (VLLF…LLAG), 180–202 (WMKL…YLLR), 207–227 (FIAA…LVLG), 230–250 (LFME…GILL), 268–288 (GLLL…GVLY), 291–311 (ILEI…VLYL), 324–344 (LQFS…FSAA), and 356–376 (PLLL…MQGV). The RCK N-terminal domain maps to 400 to 519 (KPQVIVVGFG…AGVTQFSRET (120 aa)).

It belongs to the monovalent cation:proton antiporter 2 (CPA2) transporter (TC 2.A.37) family. KefB subfamily. As to quaternary structure, interacts with the regulatory subunit KefG.

Its subcellular location is the cell inner membrane. Functionally, pore-forming subunit of a potassium efflux system that confers protection against electrophiles. Catalyzes K(+)/H(+) antiport. The polypeptide is Glutathione-regulated potassium-efflux system protein KefB (Erwinia tasmaniensis (strain DSM 17950 / CFBP 7177 / CIP 109463 / NCPPB 4357 / Et1/99)).